A 505-amino-acid polypeptide reads, in one-letter code: Probable alpha-L-arabinofuranosidase C (505 aa).

N-linked (GlcNAc...) asparagine glycans are attached at residues Asn-152, Asn-181, and Asn-269.

The protein belongs to the glycosyl hydrolase 51 family.

The protein resides in the secreted. It catalyses the reaction Hydrolysis of terminal non-reducing alpha-L-arabinofuranoside residues in alpha-L-arabinosides.. It participates in glycan metabolism; L-arabinan degradation. Its function is as follows. Alpha-L-arabinofuranosidase involved in the degradation of arabinoxylan, a major component of plant hemicellulose. Acts only on small linear 1,5-alpha-linked L-arabinofuranosyl oligosaccharides. The protein is Probable alpha-L-arabinofuranosidase C (abfC) of Aspergillus niger (strain ATCC MYA-4892 / CBS 513.88 / FGSC A1513).